Consider the following 569-residue polypeptide: Spermatogenesis-associated protein 16 (569 aa).

Residues 67–92 (KGIKEKQSNDLEKAAFKRKAEGEEKP) show a composition bias toward basic and acidic residues. The segment at 67 to 96 (KGIKEKQSNDLEKAAFKRKAEGEEKPTRKK) is disordered.

It belongs to the SPATA16 family. In terms of tissue distribution, expressed in testis.

It is found in the golgi apparatus. It localises to the cytoplasmic vesicle. The protein localises to the secretory vesicle. Its subcellular location is the acrosome. Essential for spermiogenesis and male fertility. Involved in the formation of sperm acrosome during spermatogenesis. The sequence is that of Spermatogenesis-associated protein 16 (SPATA16) from Homo sapiens (Human).